Reading from the N-terminus, the 327-residue chain is MAKAPMRVAVTGAAGQIGYSLLFRIANGDMLGKDQPVILQLLDLPQAQAAVKGVVMELEDCAFPLLAGVVITDDPKVAFKDADVALLVGARPRSKGMERKDLLEANAQIFTVQGKALDEVASRDVKVLVVGNPANTNAYIAMKSAPNLKRENFTAMLRLDHNRALSQIAAKTGKPVSSIEKMFVWGNHSPTMYADYRYATVDGKSVKDMINDPVWNNDVFLPTVGKRGAAIIEARGLSSAASAANAAIDHVHDWVLGSNGKVVTMGIPSNGEYGIPNDVMFGYPVTTANGKYEIVKGLEIDAYSQEKINITLKELEEERAGVQHLLG.

12-18 contacts NAD(+); that stretch reads GAAGQIG. Substrate-binding residues include R93 and R99. Residues N106, Q113, and 130 to 132 contribute to the NAD(+) site; that span reads VGN. Substrate-binding residues include N132 and R163. Residue H188 is the Proton acceptor of the active site.

The protein belongs to the LDH/MDH superfamily. MDH type 2 family.

The enzyme catalyses (S)-malate + NAD(+) = oxaloacetate + NADH + H(+). Its function is as follows. Catalyzes the reversible oxidation of malate to oxaloacetate. This Cupriavidus metallidurans (strain ATCC 43123 / DSM 2839 / NBRC 102507 / CH34) (Ralstonia metallidurans) protein is Malate dehydrogenase.